The chain runs to 297 residues: Probable replication protein rep (297 aa).

Belongs to the initiator RepB protein family.

This chain is Probable replication protein rep (rep), found in Bifidobacterium longum (strain NCC 2705).